Consider the following 494-residue polypeptide: Nuclear distribution protein PAC1 (494 aa).

In terms of domain architecture, LisH spans Q14–R46. Residues N90–L123 adopt a coiled-coil conformation. WD repeat units follow at residues N153–A192, S196–Q244, G251–T292, P295–T334, H347–H395, G415–E454, and H457–F492.

This sequence belongs to the WD repeat LIS1/nudF family. As to quaternary structure, self-associates. Interacts with NDL1 and dynein.

It is found in the cytoplasm. Its subcellular location is the cytoskeleton. It localises to the spindle pole. Functionally, positively regulates the activity of the minus-end directed microtubule motor protein dynein. Plays a central role in positioning the mitotic spindle at the bud neck during cell division. Targets cytoplasmic dynein to microtubule plus ends, thereby promoting dynein-mediated microtubule sliding along the bud cortex and consequently the movement of the mitotic spindle to the bud neck. This is Nuclear distribution protein PAC1 from Saccharomyces cerevisiae (strain JAY291) (Baker's yeast).